The primary structure comprises 412 residues: UPF0761 membrane protein LPC_2650 (412 aa).

Helical transmembrane passes span 36 to 56, 99 to 119, 137 to 157, 177 to 197, 210 to 230, and 241 to 261; these read ALAF…LAIF, LSIW…FTIE, AFLL…LSLA, ILHY…YVVV, GGLV…YYLI, and AFAT…ITLL.

Belongs to the UPF0761 family.

It is found in the cell inner membrane. The chain is UPF0761 membrane protein LPC_2650 from Legionella pneumophila (strain Corby).